We begin with the raw amino-acid sequence, 245 residues long: Eukaryotic translation initiation factor 4E type 2 (245 aa).

A compositionally biased stretch (basic and acidic residues) spans 1-38 (MNNKFDALKDDDSGDHDQNEENSTQKDGEKEKTERDKN). Residues 1–52 (MNNKFDALKDDDSGDHDQNEENSTQKDGEKEKTERDKNQSSSKRKAVVPGPA) are disordered. Position 13 is a phosphoserine (S13). Residues 54–57 (HPLQ) are EIF4EBP1/2/3 binding. 78–79 (YE) lines the mRNA pocket. Positions 95–99 (WRFYS) are EIF4EBP1/2/3 binding. Residues H110 and 124–125 (WE) contribute to the mRNA site. At K134 the chain carries N6-acetyllysine; alternate. K134 is covalently cross-linked (Glycyl lysine isopeptide (Lys-Gly) (interchain with G-Cter in ISG15); alternate). The interval 150-157 (NLILAMLG) is EIF4EBP1/2/3 binding. MRNA-binding positions include 174–179 (RFQEDI) and 222–224 (KMP). K222 participates in a covalent cross-link: Glycyl lysine isopeptide (Lys-Gly) (interchain with G-Cter in ISG15).

Belongs to the eukaryotic initiation factor 4E family. As to quaternary structure, interacts with EIF4EBP1, EIF4EBP2 and EIF4EBP3. Does not interact with eIF4G (EIF4G1, EIF4G2 or EIF4G3). Component of the 4EHP-GYF2 complex, at least composed of EIF4E2, GIGYF2 and ZNF598. Interacts with GIGYF2 (via the 4EHP-binding motif); the interaction is direct. Interacts with EIF4ENIF1/4E-T (via YXXXXLphi motif); increasing affinity for the 7-methylguanosine-containing mRNA cap. Ubiquitinated by ARIH1. The consequences of ubiquitination are however unclear: according to a report, EIF4E2 ubiquitination leads to promote EIF4E2 cap-binding and protein translation arrest. According to another report ubiquitination leads to its subsequent degradation. Post-translationally, ISGylation enhances its cap structure-binding activity and translation-inhibition activity.

Its subcellular location is the cytoplasm. The protein localises to the P-body. In terms of biological role, recognizes and binds the 7-methylguanosine-containing mRNA cap during an early step in the initiation. Acts as a repressor of translation initiation. In contrast to EIF4E, it is unable to bind eIF4G (EIF4G1, EIF4G2 or EIF4G3), suggesting that it acts by competing with EIF4E and block assembly of eIF4F at the cap. In P-bodies, component of a complex that promotes miRNA-mediated translational repression. Involved in virus-induced host response by mediating miRNA MIR34A-induced translational silencing which controls IFNB1 production by a negative feedback mechanism. Its function is as follows. Component of the 4EHP-GYF2 complex, a multiprotein complex that acts as a repressor of translation initiation. In association with GIGYF2, assists ribosome-associated quality control (RQC) by sequestering the mRNA cap, blocking ribosome initiation and decreasing the translational load on problematic messages. Part of a pathway that works in parallel to RQC-mediated degradation of the stalled nascent polypeptide. GIGYF2 and EIF4E2 work downstream and independently of ZNF598, which seems to work as a scaffold that can recruit them to faulty mRNA even if alternative recruitment mechanisms may exist. Functionally, (Microbial infection) Upon SARS coronavirus-2/SARS-CoV-2 infection, the interaction with non-structural protein 2 (nsp2) with GIGYF2 enhances GIGYF2 binding to EIF4E2 and increases repression of translation initiation of genes involved in antiviral innate immune response such as IFNB1. The chain is Eukaryotic translation initiation factor 4E type 2 from Homo sapiens (Human).